Here is a 648-residue protein sequence, read N- to C-terminus: Macrolide export ATP-binding/permease protein MacB (648 aa).

Residues 5–243 (LELCNVSRSY…QGVDAAVVNT (239 aa)) enclose the ABC transporter domain. An ATP-binding site is contributed by 41–48 (GVSGSGKS). Helical transmembrane passes span 273-293 (LLTM…VVVG), 417-437 (ANVV…IGVA), 523-543 (LFLT…VMNI), 577-597 (VLVC…IAFM), and 611-631 (LTAL…FGWL).

The protein belongs to the ABC transporter superfamily. Macrolide exporter (TC 3.A.1.122) family. As to quaternary structure, homodimer. Part of the tripartite efflux system MacAB-TolC, which is composed of an inner membrane transporter, MacB, a periplasmic membrane fusion protein, MacA, and an outer membrane component, TolC. The complex forms a large protein conduit and can translocate molecules across both the inner and outer membranes. Interacts with MacA.

It is found in the cell inner membrane. Part of the tripartite efflux system MacAB-TolC. MacB is a non-canonical ABC transporter that contains transmembrane domains (TMD), which form a pore in the inner membrane, and an ATP-binding domain (NBD), which is responsible for energy generation. Confers resistance against macrolides. In Salmonella choleraesuis (strain SC-B67), this protein is Macrolide export ATP-binding/permease protein MacB.